Here is a 118-residue protein sequence, read N- to C-terminus: MQTMGGEHLLLSQLKGSFFLLLLAYFFRGRSPYYARCYRRLAVTPGAITIAIAIATDSIPALAKSKVLVSVCSHTDPCTASCNLIPFPRPFSNSLTRFLFCLGSARFCISFPCFGLSI.

Helical transmembrane passes span E7–F27, L41–A61, and F98–I118.

It is found in the mitochondrion membrane. Functionally, involved in selective mitochondria autophagy (mitophagy). This chain is Altered inheritance of mitochondria protein 26, mitochondrial (AIM26), found in Saccharomyces cerevisiae (strain ATCC 204508 / S288c) (Baker's yeast).